The chain runs to 246 residues: 4-hydroxy-tetrahydrodipicolinate reductase (246 aa).

7 to 12 is a binding site for NAD(+); sequence GCSGRM. Arg-34 lines the NADP(+) pocket. NAD(+) contacts are provided by residues 76-78 and 102-105; these read ATT and CPNT. His-135 serves as the catalytic Proton donor/acceptor. Residue His-136 participates in (S)-2,3,4,5-tetrahydrodipicolinate binding. Lys-139 functions as the Proton donor in the catalytic mechanism. 145–146 contacts (S)-2,3,4,5-tetrahydrodipicolinate; the sequence is GT.

Belongs to the DapB family.

The protein resides in the cytoplasm. It catalyses the reaction (S)-2,3,4,5-tetrahydrodipicolinate + NAD(+) + H2O = (2S,4S)-4-hydroxy-2,3,4,5-tetrahydrodipicolinate + NADH + H(+). The catalysed reaction is (S)-2,3,4,5-tetrahydrodipicolinate + NADP(+) + H2O = (2S,4S)-4-hydroxy-2,3,4,5-tetrahydrodipicolinate + NADPH + H(+). It participates in amino-acid biosynthesis; L-lysine biosynthesis via DAP pathway; (S)-tetrahydrodipicolinate from L-aspartate: step 4/4. Catalyzes the conversion of 4-hydroxy-tetrahydrodipicolinate (HTPA) to tetrahydrodipicolinate. This is 4-hydroxy-tetrahydrodipicolinate reductase from Chlamydia felis (strain Fe/C-56) (Chlamydophila felis).